Consider the following 232-residue polypeptide: Dehydrin DHN2 (232 aa).

Polar residues predominate over residues 1 to 12 (MSQYQNQYGAQT). Disordered stretches follow at residues 1–92 (MSQY…STNT), 131–156 (PGTEQSRTHTDGTGYGSTGYGASGGG), and 173–232 (PGDK…CTGH). Over residues 73–82 (THTGGVGGYG) the composition is skewed to gly residues. Over residues 131-140 (PGTEQSRTHT) the composition is skewed to basic and acidic residues. The span at 143 to 156 (TGYGSTGYGASGGG) shows a compositional bias: gly residues. Over residues 200–223 (YVREEHRVDHGEKKGIMDKIKEKL) the composition is skewed to basic and acidic residues.

It belongs to the plant dehydrin family.

The polypeptide is Dehydrin DHN2 (DHN2) (Pisum sativum (Garden pea)).